A 100-amino-acid chain; its full sequence is Large ribosomal subunit protein uL23 (100 aa).

The protein belongs to the universal ribosomal protein uL23 family. In terms of assembly, part of the 50S ribosomal subunit. Contacts protein L29, and trigger factor when it is bound to the ribosome.

Functionally, one of the early assembly proteins it binds 23S rRNA. One of the proteins that surrounds the polypeptide exit tunnel on the outside of the ribosome. Forms the main docking site for trigger factor binding to the ribosome. The chain is Large ribosomal subunit protein uL23 from Escherichia coli O157:H7.